The sequence spans 309 residues: MPICIPDELPAVNFLQNENVFVMTSTRANIQNIRPLKVLLLNLMPKKIETENQFLRLLSNTPLQVDIQLLRIDNRKCRNTPAEHLNNFYCDFEQIKHQNFDGLIVTGAPLGLVEFEDVAYWKQIERIISWAKEHVTSTLFICWAVQAALNILYGLPKFTREVKLSGVYYHSTLNPLALLTRGFDESFFAPHSRYADFPEQVVREHTDLDILSSSEDAGVYLLASKDKRMVFVTGHPEYDAGTLASEYLRDLAAGLAPKIPINYFPDNNPERKPLASWRSHGHLLFSNWLNYYVYQITPYDLTYMNPTLD.

Catalysis depends on cysteine 142, which acts as the Acyl-thioester intermediate. Positions 163 and 192 each coordinate substrate. Residue histidine 235 is the Proton acceptor of the active site. Glutamate 237 is an active-site residue. Arginine 249 provides a ligand contact to substrate.

This sequence belongs to the MetA family.

The protein localises to the cytoplasm. The catalysed reaction is L-homoserine + succinyl-CoA = O-succinyl-L-homoserine + CoA. It participates in amino-acid biosynthesis; L-methionine biosynthesis via de novo pathway; O-succinyl-L-homoserine from L-homoserine: step 1/1. In terms of biological role, transfers a succinyl group from succinyl-CoA to L-homoserine, forming succinyl-L-homoserine. The chain is Homoserine O-succinyltransferase from Photorhabdus laumondii subsp. laumondii (strain DSM 15139 / CIP 105565 / TT01) (Photorhabdus luminescens subsp. laumondii).